Reading from the N-terminus, the 798-residue chain is Disintegrin and metalloproteinase domain-containing protein B (798 aa).

The first 23 residues, 1–23 (MKAFSCLLAVIATAASLFQHVDA), serve as a signal peptide directing secretion. Topologically, residues 24–706 (SHARDKLNNI…VSDWVSRHKP (683 aa)) are extracellular. N-linked (GlcNAc...) asparagine glycosylation is found at Asn-32, Asn-226, Asn-227, Asn-313, and Asn-407. Residues 271–510 (KVALIGVVAD…RTILTNCLTT (240 aa)) form the Peptidase M12B domain. 3 cysteine pairs are disulfide-bonded: Cys-395-Cys-495, Cys-448-Cys-459, and Cys-580-Cys-600. His-431 is a Zn(2+) binding site. Glu-432 is an active-site residue. The Zn(2+) site is built by His-435 and His-441. The region spanning 519–608 (GQQCGNGIVE…DCPHDIHSKD (90 aa)) is the Disintegrin domain. Residues 707–727 (IVIGVAVGAGCLLLLAIASCI) traverse the membrane as a helical segment. The Cytoplasmic portion of the chain corresponds to 728-798 (CGRSRRQRPR…PGHMPPTRYA (71 aa)). A disordered region spans residues 734-798 (QRPRNRKMPP…PGHMPPTRYA (65 aa)). A compositionally biased stretch (pro residues) spans 775–792 (NNIPPPINAPPPAYPGHM).

The cofactor is Zn(2+).

The protein resides in the membrane. In terms of biological role, probable zinc protease. The chain is Disintegrin and metalloproteinase domain-containing protein B (ADM-B) from Trichophyton verrucosum (strain HKI 0517).